Reading from the N-terminus, the 346-residue chain is uncharacterized protein (346 aa).

Belongs to the PhyH family.

It localises to the cytoplasm. This is an uncharacterized protein from Saccharomyces cerevisiae (strain ATCC 204508 / S288c) (Baker's yeast).